Consider the following 436-residue polypeptide: tRNA(Ile)-lysidine synthase (436 aa).

27–32 contacts ATP; the sequence is SGGVDS.

It belongs to the tRNA(Ile)-lysidine synthase family.

It is found in the cytoplasm. It carries out the reaction cytidine(34) in tRNA(Ile2) + L-lysine + ATP = lysidine(34) in tRNA(Ile2) + AMP + diphosphate + H(+). Ligates lysine onto the cytidine present at position 34 of the AUA codon-specific tRNA(Ile) that contains the anticodon CAU, in an ATP-dependent manner. Cytidine is converted to lysidine, thus changing the amino acid specificity of the tRNA from methionine to isoleucine. In Vibrio vulnificus (strain CMCP6), this protein is tRNA(Ile)-lysidine synthase.